The sequence spans 381 residues: Stearoyl-[acyl-carrier-protein] 9-desaturase 1, chloroplastic (381 aa).

The N-terminal 26 residues, 1 to 26, are a transit peptide targeting the chloroplast; sequence MQVVGTVRVSGCGAVVAPSRRQCRVS. Fe cation-binding residues include Glu-120, Glu-158, His-161, Glu-211, Glu-244, and His-247.

The protein belongs to the fatty acid desaturase type 2 family. In terms of assembly, homodimer. It depends on Fe(2+) as a cofactor.

The protein resides in the plastid. It is found in the chloroplast. The catalysed reaction is octadecanoyl-[ACP] + 2 reduced [2Fe-2S]-[ferredoxin] + O2 + 2 H(+) = (9Z)-octadecenoyl-[ACP] + 2 oxidized [2Fe-2S]-[ferredoxin] + 2 H2O. It functions in the pathway lipid metabolism; fatty acid metabolism. In terms of biological role, converts stearoyl-ACP to oleoyl-ACP by introduction of a cis double bond between carbons 9 and 10 of the acyl chain. This chain is Stearoyl-[acyl-carrier-protein] 9-desaturase 1, chloroplastic, found in Oryza sativa subsp. indica (Rice).